A 61-amino-acid chain; its full sequence is Potassium channel toxin kappa-KTx 2.8 (61 aa).

The signal sequence occupies residues 1–21 (GTVYVFLLLLAFGIFTDISNA). Residues 22 to 35 (CSEQMDDEDSYEVE) constitute a propeptide that is removed on maturation. 2 disulfides stabilise this stretch: cysteine 41/cysteine 59 and cysteine 45/cysteine 55.

This sequence belongs to the short scorpion toxin superfamily. Potassium channel inhibitor kappa-KTx family. Kappa-KTx 2 subfamily. In terms of tissue distribution, expressed by the venom gland.

The protein localises to the secreted. In terms of biological role, voltage-gated potassium channel inhibitor (Kv) that acts on Kv1.3/KCNA3 and Kv7.1/KCNQ1. 1 uM of the toxin inhibits Kv1.3/KCNA3 currents by 35.1%, whereas 10 uM of the toxin inhibits Kv7.1/KCNQ1 currents by 44.9%. The chain is Potassium channel toxin kappa-KTx 2.8 from Heterometrus petersii (Asian forest scorpion).